The sequence spans 735 residues: Muskelin (735 aa).

Alanine 2 bears the N-acetylalanine mark. The LisH domain maps to 172 to 204; it reads REQEAIRLCLKHFRQHNYTEAFESLQKKTKIAL. Residues 206–258 form the CTLH domain; the sequence is HPMLTDIHDKLVLKGDFDACEELIEKAVNDGLFNQYISQQEYKPRWSQIIPKS. Kelch repeat units lie at residues 284 to 330, 339 to 391, 408 to 458, 469 to 515, 526 to 578, and 597 to 651; these read TVYL…SCHK, QIYT…FDHQ, ILTC…SRIG, CLYV…TGFT, EIHV…SLQE, and VHYL…AQVD.

In terms of assembly, homodimer; may form higher oligomers. Identified in the CTLH complex that contains GID4, RANBP9 and/or RANBP10, MKLN1, MAEA, RMND5A (or alternatively its paralog RMND5B), GID8, ARMC8, WDR26 and YPEL5. Within this complex, MAEA, RMND5A (or alternatively its paralog RMND5B), GID8, WDR26, and RANBP9 and/or RANBP10 form the catalytic core, while GID4, MKLN1, ARMC8 and YPEL5 have ancillary roles. Interacts with RANBP9. Part of a complex consisting of RANBP9, MKLN1 and GID8. Interacts with GABRA1. Interacts with the C-terminal tail of PTGER3.

It is found in the cytoplasm. The protein localises to the cytosol. Its subcellular location is the nucleus. The protein resides in the nucleoplasm. It localises to the cell projection. It is found in the ruffle. The protein localises to the cell cortex. Its subcellular location is the synapse. The protein resides in the postsynapse. Component of the CTLH E3 ubiquitin-protein ligase complex that selectively accepts ubiquitin from UBE2H and mediates ubiquitination and subsequent proteasomal degradation of the transcription factor HBP1. Required for internalization of the GABA receptor GABRA1 from the cell membrane via endosomes and subsequent GABRA1 degradation. Acts as a mediator of cell spreading and cytoskeletal responses to the extracellular matrix component THBS1. The sequence is that of Muskelin (MKLN1) from Homo sapiens (Human).